The primary structure comprises 431 residues: MANSC domain-containing protein 1 (431 aa).

An N-terminal signal peptide occupies residues 1-26 (MFFGGKGSLTYTLVIICFLTLRLAAS). The Extracellular portion of the chain corresponds to 27–385 (QNCLNKSLED…QYGLPFEKWL (359 aa)). N31 is a glycosylation site (N-linked (GlcNAc...) asparagine). In terms of domain architecture, MANSC spans 33–117 (SLEDVVIDIQ…LKPAKGLRSY (85 aa)). N-linked (GlcNAc...) asparagine glycans are attached at residues N222 and N251. Positions 236–279 (HTTSATPKPAIRLPTNASVTPSGTSQPQLATTSPPVTTVTSQPP) are disordered. The span at 250-265 (TNASVTPSGTSQPQLA) shows a compositional bias: polar residues. Residues 266-279 (TTSPPVTTVTSQPP) are compositionally biased toward low complexity. 2 N-linked (GlcNAc...) asparagine glycosylation sites follow: N327 and N352. The segment at 352–372 (NKTASWEGREASPGRSSQGNV) is disordered. A helical transmembrane segment spans residues 386–408 (LIGSLLFGVLFLVIGLVLLGRIL). Over 409-431 (SESLRRKRYSRLDYLINGIYVDI) the chain is Cytoplasmic.

Its subcellular location is the membrane. The chain is MANSC domain-containing protein 1 (MANSC1) from Macaca fascicularis (Crab-eating macaque).